A 170-amino-acid chain; its full sequence is Peptide deformylase (170 aa).

Residues Cys-91 and His-133 each coordinate Fe cation. Glu-134 is a catalytic residue. His-137 lines the Fe cation pocket.

Belongs to the polypeptide deformylase family. It depends on Fe(2+) as a cofactor.

It catalyses the reaction N-terminal N-formyl-L-methionyl-[peptide] + H2O = N-terminal L-methionyl-[peptide] + formate. Its function is as follows. Removes the formyl group from the N-terminal Met of newly synthesized proteins. Requires at least a dipeptide for an efficient rate of reaction. N-terminal L-methionine is a prerequisite for activity but the enzyme has broad specificity at other positions. The polypeptide is Peptide deformylase (Pasteurella multocida (strain Pm70)).